The following is a 222-amino-acid chain: Cytidylate kinase (222 aa).

Residue 9-17 (GPAGSGKTT) coordinates ATP.

This sequence belongs to the cytidylate kinase family. Type 1 subfamily.

The protein localises to the cytoplasm. The catalysed reaction is CMP + ATP = CDP + ADP. It carries out the reaction dCMP + ATP = dCDP + ADP. The sequence is that of Cytidylate kinase from Thermosipho africanus (strain TCF52B).